The primary structure comprises 206 residues: Thymidylate kinase (206 aa).

Residue 10-17 (GIDGAGKS) coordinates ATP.

Belongs to the thymidylate kinase family.

It carries out the reaction dTMP + ATP = dTDP + ADP. In terms of biological role, phosphorylation of dTMP to form dTDP in both de novo and salvage pathways of dTTP synthesis. The chain is Thymidylate kinase (tmk) from Neisseria meningitidis serogroup B (strain ATCC BAA-335 / MC58).